A 710-amino-acid polypeptide reads, in one-letter code: Dendrin (710 aa).

4 disordered regions span residues 1–22 (MLDG…DEES), 62–195 (WARG…PWGG), 213–274 (AGTA…KRLD), and 324–375 (GLNS…GKEG). Residues 103 to 134 (AEVRAREQEKRKAASQEREAKETERKRRKAGG) are a coiled coil. Over residues 105–127 (VRAREQEKRKAASQEREAKETER) the composition is skewed to basic and acidic residues. A nuclear localization region spans residues 113–131 (RKAASQEREAKETERKRRK). The interval 186 to 236 (GVAWAGPWGGRRPGPPSYEAHLLLRGSAGTAPRRRWDRPPPYVAPPSYEGP) is interaction with MAGI2. The span at 265-274 (EGGRTKKRLD) shows a compositional bias: basic and acidic residues. The interaction with ACTN1 stretch occupies residues 341-435 (PGTDAALSRS…LEVWKVTRRA (95 aa)). Over residues 360–370 (PRSRQHLRGSR) the composition is skewed to basic residues. Serine 388 is modified (phosphoserine). 3 disordered regions span residues 390–422 (KKPP…EGAE), 469–508 (PRTQ…ANPS), and 521–710 (NQPS…RERE). The interaction with CD2AP and NPHS1 stretch occupies residues 407–708 (GGTGWKESLG…TRKTPQGNRE (302 aa)). Polar residues predominate over residues 469 to 491 (PRTQQGQLVPSGESCSVSDSLSQ). The span at 693-710 (GFIREDTRKTPQGNRERE) shows a compositional bias: basic and acidic residues.

Forms a ternary complex with MAGI2 and SH3KBP1; recruits DDN to the cytoplasm. Interacts with MAGI1. Interacts with ACTN1 and may interact with WWC1. Interacts with the podocyte slit diaphragm proteins CD2AP, NPHS1 and NPHS2; the interaction with CD2AP and NPHS1 is direct. Two forms of 81 kDa and 89 kDa are expressed in brain. The 81 kDa form is the only one found in kidney podocytes.

It localises to the cell projection. It is found in the dendritic spine membrane. Its subcellular location is the cytoplasm. The protein resides in the endoplasmic reticulum membrane. The protein localises to the perikaryon. It localises to the nucleus. In terms of biological role, promotes apoptosis of kidney glomerular podocytes. Podocytes are highly specialized cells essential to the ultrafiltration of blood, resulting in the extraction of urine and the retention of protein. This Mus musculus (Mouse) protein is Dendrin (Ddn).